Here is a 96-residue protein sequence, read N- to C-terminus: Phosphoribosyl-ATP pyrophosphatase (96 aa).

The protein belongs to the PRA-PH family.

Its subcellular location is the cytoplasm. It catalyses the reaction 1-(5-phospho-beta-D-ribosyl)-ATP + H2O = 1-(5-phospho-beta-D-ribosyl)-5'-AMP + diphosphate + H(+). Its pathway is amino-acid biosynthesis; L-histidine biosynthesis; L-histidine from 5-phospho-alpha-D-ribose 1-diphosphate: step 2/9. In Methanococcus maripaludis (strain C5 / ATCC BAA-1333), this protein is Phosphoribosyl-ATP pyrophosphatase.